The primary structure comprises 1056 residues: Kinesin-like protein KIF11 (1056 aa).

Residues 18–359 enclose the Kinesin motor domain; it reads NIQVVVRCRP…LEYAHRAKNI (342 aa). 105-112 contributes to the ATP binding site; it reads GQTGTGKT. K146 bears the N6-acetyllysine mark. 2 coiled-coil regions span residues 364–480 and 736–763; these read EVNQ…KEEY and LEEK…DIVN. Phosphothreonine is present on T458. K477 is covalently cross-linked (Glycyl lysine isopeptide (Lys-Gly) (interchain with G-Cter in SUMO2)). Phosphothreonine is present on T925. T926 bears the Phosphothreonine; by CDK1 mark. The residue at position 1033 (S1033) is a Phosphoserine; by NEK6. Residue K1034 forms a Glycyl lysine isopeptide (Lys-Gly) (interchain with G-Cter in ubiquitin) linkage.

This sequence belongs to the TRAFAC class myosin-kinesin ATPase superfamily. Kinesin family. BimC subfamily. Interacts with the thyroid hormone receptor in the presence of thyroid hormone. Component of a large chromatin remodeling complex, at least composed of MYSM1, PCAF, RBM10 and KIF11/TRIP5. Interacts (via C-terminus) with the kinase NEK6 in both interphase and mitosis. Interacts with RARRES1 and AGBL2. Interacts with TPX2. Phosphorylated exclusively on serine during S phase, but on both serine and Thr-926 during mitosis, so controlling the association of KIF11 with the spindle apparatus (probably during early prophase). In terms of processing, a subset of this protein primarily localized at the spindle pole is phosphorylated by NEK6 during mitosis; phosphorylation is required for mitotic function. Post-translationally, ubiquitinated at Lys-1034 by UHRF1 via 'Lys-63'-linked ubiquitin chains, leading to interaction with spindle assembly factor TPX2, thereby ensuring accurate distribution to the spindles during metaphase.

The protein resides in the cytoplasm. It localises to the cytoskeleton. The protein localises to the spindle pole. In terms of biological role, motor protein required for establishing a bipolar spindle and thus contributing to chromosome congression during mitosis. Required in non-mitotic cells for transport of secretory proteins from the Golgi complex to the cell surface. In Homo sapiens (Human), this protein is Kinesin-like protein KIF11 (KIF11).